Reading from the N-terminus, the 325-residue chain is DNA-directed RNA polymerase subunit alpha (325 aa).

The tract at residues 1-231 (MQTSLLKPKI…DQLSVFAALE (231 aa)) is alpha N-terminal domain (alpha-NTD). The alpha C-terminal domain (alpha-CTD) stretch occupies residues 246-325 (IDPILLRPVD…ENWPPAGLDK (80 aa)).

This sequence belongs to the RNA polymerase alpha chain family. As to quaternary structure, homodimer. The RNAP catalytic core consists of 2 alpha, 1 beta, 1 beta' and 1 omega subunit. When a sigma factor is associated with the core the holoenzyme is formed, which can initiate transcription.

It carries out the reaction RNA(n) + a ribonucleoside 5'-triphosphate = RNA(n+1) + diphosphate. DNA-dependent RNA polymerase catalyzes the transcription of DNA into RNA using the four ribonucleoside triphosphates as substrates. The polypeptide is DNA-directed RNA polymerase subunit alpha (Paraburkholderia phytofirmans (strain DSM 17436 / LMG 22146 / PsJN) (Burkholderia phytofirmans)).